A 378-amino-acid polypeptide reads, in one-letter code: Septin-5 (378 aa).

The region spanning 50–323 is the Septin-type G domain; that stretch reads KGFDFTLMVA…ENYRAHCIQQ (274 aa). The segment at 60–67 is G1 motif; it reads GESGLGKS. Residues 60 to 67, Thr94, and Gly120 contribute to the GTP site; that span reads GESGLGKS. Residues 117-120 are G3 motif; that stretch reads DTPG. At Arg177 the chain carries Omega-N-methylarginine. Positions 198–201 are G4 motif; that stretch reads AKAD. Residue 199–207 coordinates GTP; it reads KADCLVPSE. Ser234 carries the phosphoserine modification. Residues Gly257 and Arg272 each contribute to the GTP site. Ser336 is modified (phosphoserine). At Thr345 the chain carries Phosphothreonine. The stretch at 347-378 forms a coiled coil; that stretch reads DAETEKLIRMKDEELRRMQEMLQRMKQQMQDQ.

It belongs to the TRAFAC class TrmE-Era-EngA-EngB-Septin-like GTPase superfamily. Septin GTPase family. Septins polymerize into heterooligomeric protein complexes that form filaments, and can associate with cellular membranes, actin filaments and microtubules. GTPase activity is required for filament formation. Interacts with SEPTIN2 and SEPTIN5. In platelets, associated with a complex containing STX4. Interacts with PRKN; this interaction leads to SEPTIN5 ubiquitination and degradation. Interacts with DYRK1A. Interacts with STX1A; in the cerebellar cortex. Phosphorylated by DYRK1A.

It is found in the cytoplasm. The protein resides in the cytoskeleton. In terms of biological role, filament-forming cytoskeletal GTPase. May play a role in cytokinesis (Potential). May play a role in platelet secretion. This Macaca fascicularis (Crab-eating macaque) protein is Septin-5.